We begin with the raw amino-acid sequence, 515 residues long: Phenylalanine--tRNA ligase beta subunit (515 aa).

Residues 263 to 334 (HEYVKIYVDE…IVMGYNQMPR (72 aa)) form the B5 domain. Mg(2+) is bound by residues Asn312, Asp318, Glu321, and Asp322.

The protein belongs to the phenylalanyl-tRNA synthetase beta subunit family. Type 2 subfamily. In terms of assembly, tetramer of two alpha and two beta subunits. It depends on Mg(2+) as a cofactor.

The protein resides in the cytoplasm. It catalyses the reaction tRNA(Phe) + L-phenylalanine + ATP = L-phenylalanyl-tRNA(Phe) + AMP + diphosphate + H(+). The polypeptide is Phenylalanine--tRNA ligase beta subunit (Pyrobaculum aerophilum (strain ATCC 51768 / DSM 7523 / JCM 9630 / CIP 104966 / NBRC 100827 / IM2)).